We begin with the raw amino-acid sequence, 228 residues long: Ankyrin repeat domain-containing protein 46 (228 aa).

ANK repeat units follow at residues Q11 to I40, R44 to A73, Q77 to I103, and Q107 to G138. The chain crosses the membrane as a helical span at residues V195–G215.

The protein resides in the membrane. The chain is Ankyrin repeat domain-containing protein 46 (ANKRD46) from Bos taurus (Bovine).